Here is a 515-residue protein sequence, read N- to C-terminus: Bifunctional purine biosynthesis protein PurH (515 aa).

In terms of domain architecture, MGS-like spans 1-145; the sequence is MTKRVLISVS…KNHASVTVVV (145 aa).

It belongs to the PurH family.

It carries out the reaction (6R)-10-formyltetrahydrofolate + 5-amino-1-(5-phospho-beta-D-ribosyl)imidazole-4-carboxamide = 5-formamido-1-(5-phospho-D-ribosyl)imidazole-4-carboxamide + (6S)-5,6,7,8-tetrahydrofolate. The catalysed reaction is IMP + H2O = 5-formamido-1-(5-phospho-D-ribosyl)imidazole-4-carboxamide. It participates in purine metabolism; IMP biosynthesis via de novo pathway; 5-formamido-1-(5-phospho-D-ribosyl)imidazole-4-carboxamide from 5-amino-1-(5-phospho-D-ribosyl)imidazole-4-carboxamide (10-formyl THF route): step 1/1. Its pathway is purine metabolism; IMP biosynthesis via de novo pathway; IMP from 5-formamido-1-(5-phospho-D-ribosyl)imidazole-4-carboxamide: step 1/1. The chain is Bifunctional purine biosynthesis protein PurH from Streptococcus pneumoniae (strain Taiwan19F-14).